The sequence spans 2898 residues: Papilin (2898 aa).

The signal sequence occupies residues Met-1–Ser-26. A disordered region spans residues Leu-43–Ser-67. Positions Pro-57–Pro-111 constitute a TSP type-1 1 domain. Disulfide bonds link Cys-69-Cys-105, Cys-73-Cys-110, and Cys-84-Cys-95. N-linked (GlcNAc...) asparagine glycosylation is found at Asn-258 and Asn-319. Positions Asp-338–Ala-397 constitute a TSP type-1 2 domain. N-linked (GlcNAc...) asparagine glycosylation is present at Asn-419. TSP type-1 domains lie at Asn-461–Glu-521, Gly-522–Lys-575, Cys-576–Glu-633, and Cys-639–Thr-694. Disulfide bonds link Cys-462/Cys-504, Cys-473/Cys-515, and Cys-477/Cys-520. Asn-669 carries an N-linked (GlcNAc...) asparagine glycan. Disordered stretches follow at residues Leu-699 to Ser-1252 and Gly-1323 to Lys-1367. 2 stretches are compositionally biased toward acidic residues: residues Ile-708–Ile-720 and Leu-727–Asp-738. Positions Ser-768–Ile-788 are enriched in polar residues. A compositionally biased stretch (low complexity) spans Glu-801–Ser-879. Asn-889, Asn-914, Asn-917, Asn-950, and Asn-1064 each carry an N-linked (GlcNAc...) asparagine glycan. The segment covering Ala-890–Gly-1053 has biased composition (low complexity). Over residues Asn-1064–Gly-1073 the composition is skewed to polar residues. Composition is skewed to low complexity over residues Glu-1076–Thr-1091 and Ser-1104–Thr-1215. The segment covering Ser-1237–Thr-1248 has biased composition (basic residues). Positions Pro-1330–Glu-1351 are enriched in low complexity. Asn-1489 and Asn-1623 each carry an N-linked (GlcNAc...) asparagine glycan. 15 disulfide bridges follow: Cys-1612/Cys-1662, Cys-1621/Cys-1645, Cys-1637/Cys-1658, Cys-1671/Cys-1721, Cys-1680/Cys-1704, Cys-1696/Cys-1717, Cys-1730/Cys-1780, Cys-1739/Cys-1763, Cys-1755/Cys-1776, Cys-1790/Cys-1840, Cys-1799/Cys-1823, Cys-1815/Cys-1836, Cys-1849/Cys-1899, Cys-1858/Cys-1882, and Cys-1874/Cys-1895. 5 BPTI/Kunitz inhibitor domains span residues Cys-1612–Cys-1662, Cys-1671–Cys-1721, Cys-1730–Cys-1780, Cys-1790–Cys-1840, and Cys-1849–Cys-1899. N-linked (GlcNAc...) asparagine glycosylation is present at Asn-1750. Residues Lys-1902–Pro-1928 form a disordered region. The span at Pro-1905–Pro-1916 shows a compositional bias: low complexity. Cystine bridges form between Cys-1922–Cys-1972, Cys-1931–Cys-1955, and Cys-1947–Cys-1968. The BPTI/Kunitz inhibitor 6 domain maps to Cys-1922–Cys-1972. A disordered region spans residues Cys-1972–Pro-2004. Pro residues predominate over residues Pro-1977–Ala-1995. Cystine bridges form between Cys-2001/Cys-2051, Cys-2010/Cys-2034, Cys-2026/Cys-2047, Cys-2071/Cys-2121, Cys-2080/Cys-2104, Cys-2096/Cys-2117, Cys-2128/Cys-2178, Cys-2137/Cys-2161, Cys-2153/Cys-2174, Cys-2194/Cys-2244, Cys-2203/Cys-2227, Cys-2219/Cys-2240, Cys-2253/Cys-2303, Cys-2262/Cys-2286, Cys-2278/Cys-2299, Cys-2318/Cys-2371, Cys-2327/Cys-2354, and Cys-2346/Cys-2367. BPTI/Kunitz inhibitor domains are found at residues Cys-2001–Cys-2051, Cys-2071–Cys-2121, Cys-2128–Cys-2178, Cys-2194–Cys-2244, Cys-2253–Cys-2303, and Cys-2318–Cys-2371. A glycan (N-linked (GlcNAc...) asparagine) is linked at Asn-2020. An N-linked (GlcNAc...) asparagine glycan is attached at Asn-2083. N-linked (GlcNAc...) asparagine glycosylation occurs at Asn-2205. The WAP domain occupies Asp-2452–Ala-2498. Residues Asn-2465, Asn-2552, and Asn-2625 are each glycosylated (N-linked (GlcNAc...) asparagine). Ig-like C2-type domains are found at residues Pro-2523–Ala-2607, Pro-2617–Ser-2697, and Pro-2749–Ser-2840. Cysteines 2543 and 2592 form a disulfide. Cystine bridges form between Cys-2640/Cys-2687 and Cys-2775/Cys-2824. 2 N-linked (GlcNAc...) asparagine glycosylation sites follow: Asn-2784 and Asn-2838. A PLAC domain is found at Val-2847–Gly-2886.

This sequence belongs to the papilin family. In terms of assembly, homooligomer; disulfide-linked. Post-translationally, N-glycosylated. Sulfated. During embryogenesis it first appears in the extracellular matrix during gastrulation and early mesoderm development at sites where basement membranes do not subsequently form. Later, migrating hemocytes prominently produce it together with other ECM components, in basement membranes that underlie epithelia and envelop muscles and emerging organs. At various life stages, it can be synthesized by other cells, such as those of the fat body, and it also occurs in a few, circumscribed regions of relatively amorphous ECM. Isoform E is specifically expressed in ECM of heart and proventriculus. Isoform C is a major component of transitory ECM deposit in the early embryo. Isoform F is a major component of the basement membrane during embryogenesis.

Its subcellular location is the secreted. It is found in the extracellular space. It localises to the extracellular matrix. The protein resides in the basement membrane. Functionally, essential extracellular matrix (ECM) protein that influences cell rearrangements. May act by modulating metalloproteinases action during organogenesis. Able to non-competitively inhibit procollagen N-proteinase, an ADAMTS metalloproteinase. The chain is Papilin (Ppn) from Drosophila melanogaster (Fruit fly).